Here is a 468-residue protein sequence, read N- to C-terminus: MGTQEGWCLLLCLALSGAAETKPHPAEGQWRAVDVVLDCFLAKDGAHRGALASSEDRARASLVLKQVPVLDDGSLEDFTDFQGGTLAQDDPPIIFEASVDLVQIPQAEALLHADCSGKEVTCEISRYFLQMTETTVKTAAWFMANMQVSGGGPSISLVMKTPRVTKNEALWHPTLNLPLSPQGTVRTAVEFQVMTQTQSLSFLLGSSASLDCGFSMAPGLDLISVEWRLQHKGRGQLVYSWTAGQGQAVRKGATLEPAQLGMARDASLTLPGLTIQDEGTYICQITTSLYRAQQIIQLNIQASPKVRLSLANEALLPTLICDIAGYYPLDVVVTWTREELGGSPAQVSGASFSSLRQSVAGTYSISSSLTAEPGSAGATYTCQVTHISLEEPLGASTQVVPPERRTALGVIFASSLFLLALMFLGLQRRQAPTGLGLLQAERWETTSCADTQSSHLHEDRTARVSQPS.

An N-terminal signal peptide occupies residues 1–18; it reads MGTQEGWCLLLCLALSGA. At 19–405 the chain is on the lumenal side; it reads AETKPHPAEG…STQVVPPERR (387 aa). Residues 181–297 enclose the Ig-like V-type domain; the sequence is PQGTVRTAVE…SLYRAQQIIQ (117 aa). 2 disulfides stabilise this stretch: C212/C283 and C321/C382. The Ig-like C1-type domain occupies 304 to 394; sequence PKVRLSLANE…THISLEEPLG (91 aa). The chain crosses the membrane as a helical span at residues 406–426; it reads TALGVIFASSLFLLALMFLGL. The Cytoplasmic segment spans residues 427–468; that stretch reads QRRQAPTGLGLLQAERWETTSCADTQSSHLHEDRTARVSQPS. Residues 449–468 are disordered; the sequence is ADTQSSHLHEDRTARVSQPS.

In terms of assembly, interacts with peptide-free HLA-A*02-B2M complexes or those loaded with low affinity peptides, likely facilitating peptide exchange onto higher affinity peptides. Interacts with MR1 in a ligand-independent way; this interaction may stabilize MR1 pool and facilitate ligand loading and dissociation.

It is found in the cell membrane. Its subcellular location is the endoplasmic reticulum membrane. The protein resides in the microsome membrane. It localises to the golgi apparatus membrane. Component of the antigen processing and presentation pathway, which binds to MHC class I coupled with beta2-microglobulin/B2M. Association between TAPBPR and MHC class I occurs in the absence of a functional peptide-loading complex (PLC). This chain is Tapasin-related protein (TAPBPL), found in Homo sapiens (Human).